Here is a 514-residue protein sequence, read N- to C-terminus: Alanine--glyoxylate aminotransferase 2, mitochondrial (514 aa).

Residues 1-41 (MTLIWRHLLRPLCLVTPAPRILEMRPFLNLGASWTSVTKLS) constitute a mitochondrion transit peptide. An N6-acetyllysine; alternate modification is found at Lys71. An N6-succinyllysine; alternate modification is found at Lys71. Lys84 carries the N6-acetyllysine modification. Lys262 bears the N6-acetyllysine; alternate mark. Residue Lys262 is modified to N6-succinyllysine; alternate. Lys304 carries the N6-succinyllysine modification. Lys350 is subject to N6-(pyridoxal phosphate)lysine. Lys420 is modified (N6-acetyllysine; alternate). Lys420 carries the post-translational modification N6-succinyllysine; alternate.

Belongs to the class-III pyridoxal-phosphate-dependent aminotransferase family. As to quaternary structure, homotetramer. It depends on pyridoxal 5'-phosphate as a cofactor.

Its subcellular location is the mitochondrion. It carries out the reaction glyoxylate + L-alanine = glycine + pyruvate. The enzyme catalyses (R)-3-amino-2-methylpropanoate + pyruvate = 2-methyl-3-oxopropanoate + L-alanine. The catalysed reaction is 3-oxopropanoate + L-alanine = beta-alanine + pyruvate. It catalyses the reaction 2-oxobutanoate + L-alanine = (2S)-2-aminobutanoate + pyruvate. It carries out the reaction N(omega),N(omega)-dimethyl-L-arginine + pyruvate = 5-(3,3-dimethylguanidino)-2-oxopentanoate + L-alanine. The enzyme catalyses N(omega),N('omega)-dimethyl-L-arginine + pyruvate = 5-(3,3'-dimethylguanidino)-2-oxopentanoate + L-alanine. The catalysed reaction is N(omega),N(omega)-dimethyl-L-arginine + glyoxylate = 5-(3,3-dimethylguanidino)-2-oxopentanoate + glycine. It catalyses the reaction N(omega),N('omega)-dimethyl-L-arginine + glyoxylate = 5-(3,3'-dimethylguanidino)-2-oxopentanoate + glycine. It carries out the reaction N(omega)-methyl-L-arginine + pyruvate = 5-(3-methylguanidino)-2-oxopentanoate + L-alanine. The enzyme catalyses N(omega)-methyl-L-arginine + glyoxylate = 5-(3-methylguanidino)-2-oxopentanoate + glycine. The catalysed reaction is L-ornithine + pyruvate = 5-amino-2-oxopentanoate + L-alanine. It catalyses the reaction L-ornithine + glyoxylate = 5-amino-2-oxopentanoate + glycine. It carries out the reaction (2S)-2-aminobutanoate + glyoxylate = 2-oxobutanoate + glycine. The enzyme catalyses N(omega),N(omega)-dimethyl-L-arginine + oxaloacetate = 5-(3,3-dimethylguanidino)-2-oxopentanoate + L-aspartate. The catalysed reaction is oxaloacetate + L-alanine = L-aspartate + pyruvate. It catalyses the reaction N(omega),N(omega)-dimethyl-L-arginine + 2-oxobutanoate = 5-(3,3-dimethylguanidino)-2-oxopentanoate + (2S)-2-aminobutanoate. It carries out the reaction 2-oxopentanoate + N(omega),N(omega)-dimethyl-L-arginine = 5-(3,3-dimethylguanidino)-2-oxopentanoate + L-2-aminopentanoate. The enzyme catalyses 2-oxohexanoate + N(omega),N(omega)-dimethyl-L-arginine = L-2-aminohexanoate + 5-(3,3-dimethylguanidino)-2-oxopentanoate. Multifunctional aminotransferase with a broad substrate specificity. Catalyzes the conversion of glyoxylate to glycine using alanine as the amino donor. Catalyzes metabolism of not L- but the D-isomer of D-beta-aminoisobutyric acid to generate 2-methyl-3-oxopropanoate and alanine. Catalyzes the transfer of the amino group from beta-alanine to pyruvate to yield L-alanine and 3-oxopropanoate. Can metabolize NG-monomethyl-L-arginine (NMMA), asymmetric NG,NG-dimethyl-L-arginine (ADMA) and symmetric NG,N'G-dimethyl-L-arginine (SDMA). ADMA is a potent inhibitor of nitric-oxide (NO) synthase, and this activity provides mechanism through which the kidney regulates blood pressure. The protein is Alanine--glyoxylate aminotransferase 2, mitochondrial (AGXT2) of Pongo abelii (Sumatran orangutan).